The sequence spans 248 residues: 3-deoxy-manno-octulosonate cytidylyltransferase (248 aa).

It belongs to the KdsB family.

The protein resides in the cytoplasm. It carries out the reaction 3-deoxy-alpha-D-manno-oct-2-ulosonate + CTP = CMP-3-deoxy-beta-D-manno-octulosonate + diphosphate. The protein operates within nucleotide-sugar biosynthesis; CMP-3-deoxy-D-manno-octulosonate biosynthesis; CMP-3-deoxy-D-manno-octulosonate from 3-deoxy-D-manno-octulosonate and CTP: step 1/1. It functions in the pathway bacterial outer membrane biogenesis; lipopolysaccharide biosynthesis. Functionally, activates KDO (a required 8-carbon sugar) for incorporation into bacterial lipopolysaccharide in Gram-negative bacteria. In Photobacterium profundum (strain SS9), this protein is 3-deoxy-manno-octulosonate cytidylyltransferase.